The chain runs to 106 residues: Insulin-2 (106 aa).

The first 23 residues, 1–23 (MALWMQCLPLVLVLLFSTPNTEA), serve as a signal peptide directing secretion. 3 disulfide bridges follow: Cys-30–Cys-92, Cys-42–Cys-105, and Cys-91–Cys-96. Residues 56 to 83 (DIEQAQVNGPQDNELDGMQFQPQEYQKM) constitute a propeptide, c peptide.

The protein belongs to the insulin family. As to quaternary structure, heterodimer of a B chain and an A chain linked by two disulfide bonds.

It is found in the secreted. Insulin decreases blood glucose concentration. It increases cell permeability to monosaccharides, amino acids and fatty acids. It accelerates glycolysis, the pentose phosphate cycle, and glycogen synthesis in liver. This Xenopus laevis (African clawed frog) protein is Insulin-2 (ins-b).